We begin with the raw amino-acid sequence, 269 residues long: Hemin import ATP-binding protein HmuV (269 aa).

In terms of domain architecture, ABC transporter spans 5–242; the sequence is IETHSVTMRI…GLIRKVFEVC (238 aa). 37-44 is a binding site for ATP; it reads GPNGAGKS.

Belongs to the ABC transporter superfamily. Heme (hemin) importer (TC 3.A.1.14.5) family. As to quaternary structure, the complex is composed of two ATP-binding proteins (HmuV), two transmembrane proteins (HmuU) and a solute-binding protein (HmuT).

It localises to the cell inner membrane. Functionally, part of the ABC transporter complex HmuTUV involved in hemin import. Responsible for energy coupling to the transport system. This chain is Hemin import ATP-binding protein HmuV, found in Nitrobacter winogradskyi (strain ATCC 25391 / DSM 10237 / CIP 104748 / NCIMB 11846 / Nb-255).